A 425-amino-acid polypeptide reads, in one-letter code: Enolase (425 aa).

Gln-163 contacts (2R)-2-phosphoglycerate. Glu-205 serves as the catalytic Proton donor. 3 residues coordinate Mg(2+): Asp-242, Glu-285, and Asp-312. Residues Lys-337, Arg-366, Ser-367, and Lys-388 each contribute to the (2R)-2-phosphoglycerate site. The Proton acceptor role is filled by Lys-337.

The protein belongs to the enolase family. Requires Mg(2+) as cofactor.

Its subcellular location is the cytoplasm. It localises to the secreted. It is found in the cell surface. The enzyme catalyses (2R)-2-phosphoglycerate = phosphoenolpyruvate + H2O. Its pathway is carbohydrate degradation; glycolysis; pyruvate from D-glyceraldehyde 3-phosphate: step 4/5. Functionally, catalyzes the reversible conversion of 2-phosphoglycerate (2-PG) into phosphoenolpyruvate (PEP). It is essential for the degradation of carbohydrates via glycolysis. In Paracoccus denitrificans (strain Pd 1222), this protein is Enolase.